We begin with the raw amino-acid sequence, 367 residues long: tRNA/tmRNA (uracil-C(5))-methyltransferase (367 aa).

Positions 190, 218, 223, 239, and 299 each coordinate S-adenosyl-L-methionine. Residue C324 is the Nucleophile of the active site. The active-site Proton acceptor is the E358.

This sequence belongs to the class I-like SAM-binding methyltransferase superfamily. RNA M5U methyltransferase family. TrmA subfamily.

It carries out the reaction uridine(54) in tRNA + S-adenosyl-L-methionine = 5-methyluridine(54) in tRNA + S-adenosyl-L-homocysteine + H(+). The enzyme catalyses uridine(341) in tmRNA + S-adenosyl-L-methionine = 5-methyluridine(341) in tmRNA + S-adenosyl-L-homocysteine + H(+). In terms of biological role, dual-specificity methyltransferase that catalyzes the formation of 5-methyluridine at position 54 (m5U54) in all tRNAs, and that of position 341 (m5U341) in tmRNA (transfer-mRNA). The chain is tRNA/tmRNA (uracil-C(5))-methyltransferase from Yersinia pestis bv. Antiqua (strain Antiqua).